We begin with the raw amino-acid sequence, 986 residues long: Bifunctional glutamine synthetase adenylyltransferase/adenylyl-removing enzyme (986 aa).

The interval Met-1 to Ala-471 is adenylyl removase. Positions Thr-475 to Ala-986 are adenylyl transferase.

Belongs to the GlnE family. It depends on Mg(2+) as a cofactor.

The catalysed reaction is [glutamine synthetase]-O(4)-(5'-adenylyl)-L-tyrosine + phosphate = [glutamine synthetase]-L-tyrosine + ADP. The enzyme catalyses [glutamine synthetase]-L-tyrosine + ATP = [glutamine synthetase]-O(4)-(5'-adenylyl)-L-tyrosine + diphosphate. In terms of biological role, involved in the regulation of glutamine synthetase GlnA, a key enzyme in the process to assimilate ammonia. When cellular nitrogen levels are high, the C-terminal adenylyl transferase (AT) inactivates GlnA by covalent transfer of an adenylyl group from ATP to specific tyrosine residue of GlnA, thus reducing its activity. Conversely, when nitrogen levels are low, the N-terminal adenylyl removase (AR) activates GlnA by removing the adenylyl group by phosphorolysis, increasing its activity. The regulatory region of GlnE binds the signal transduction protein PII (GlnB) which indicates the nitrogen status of the cell. This is Bifunctional glutamine synthetase adenylyltransferase/adenylyl-removing enzyme from Rhizobium meliloti (strain 1021) (Ensifer meliloti).